The following is a 154-amino-acid chain: MAASGITSLPALPEDGGAAFPPGHFKDPKRLYCKNGGFFLRIHPDGRVDGVREKSDPHVKLQLQAEERGVVSIKGVCANRYLAMKEDGRLLASKCVTEECFFFERLESNNYNTYRSRKYSSWYVALKRTGQYKLGSKTGPGQKAILFLPMSAKS.

Positions 1–9 (MAASGITSL) are excised as a propeptide. Asparagine 35 is a binding site for heparin. At tyrosine 81 the chain carries Phosphotyrosine; by TEC. Lysine 94 participates in a covalent cross-link: Glycyl lysine isopeptide (Lys-Gly) (interchain with G-Cter in SUMO1). The segment at 127-143 (KRTGQYKLGSKTGPGQK) is heparin-binding.

Belongs to the heparin-binding growth factors family. In terms of assembly, monomer. Homodimer. Interacts with FGFR1, FGFR2, FGFR3 and FGFR4. Affinity between fibroblast growth factors (FGFs) and their receptors is increased by heparan sulfate glycosaminoglycans that function as coreceptors. Interacts with CSPG4, FGFBP1 and TEC. Found in a complex with FGFBP1, FGF1 and FGF2. Interacts with FGFBP3. Interacts with integrin ITGAV:ITGB3; the interaction is required for FGF2 signaling. Interacts with SNORC (via the extracellular domain). Interacts with glypican GPC3. In terms of processing, phosphorylation at Tyr-81 regulates FGF2 unconventional secretion.

Its subcellular location is the secreted. The protein localises to the nucleus. In terms of biological role, acts as a ligand for FGFR1, FGFR2, FGFR3 and FGFR4. Also acts as an integrin ligand which is required for FGF2 signaling. Binds to integrin ITGAV:ITGB3. Plays an important role in the regulation of cell survival, cell division, cell differentiation and cell migration. Functions as a potent mitogen in vitro. Can induce angiogenesis. Mediates phosphorylation of ERK1/2 and thereby promotes retinal lens fiber differentiation. This Mus musculus (Mouse) protein is Fibroblast growth factor 2 (Fgf2).